A 1138-amino-acid chain; its full sequence is BMP-2-inducible protein kinase (1138 aa).

Ser13 carries the phosphoserine modification. In terms of domain architecture, Protein kinase spans 48–313 (VTLEESLAEG…DIFQVSYFAF (266 aa)). Residues 54-62 (LAEGGFSTV) and Lys76 contribute to the ATP site. Asp177 serves as the catalytic Proton acceptor. Disordered regions lie at residues 355 to 435 (TDTI…RVLQ), 638 to 831 (NRLG…PADA), and 906 to 1018 (PRSV…EFLT). The span at 358-390 (IGPTETSIAPRQRPKANSTAATSSVLTIQSSAT) shows a compositional bias: polar residues. The segment covering 417-435 (VLMVQGPPQQPPQQHRVLQ) has biased composition (low complexity). A Phosphoserine modification is found at Ser676. Over residues 684–701 (HSPNQKSITANLTKNGGS) the composition is skewed to polar residues. A compositionally biased stretch (basic and acidic residues) spans 706–715 (KDQRAGKKTS). Residues Ser733, Ser806, and Ser807 each carry the phosphoserine modification. A compositionally biased stretch (basic and acidic residues) spans 787–813 (DKHSSDSECEQAKTKRGDTSSLRRDKP). Position 819 is a phosphothreonine (Thr819). Ser908 is modified (phosphoserine). Over residues 915 to 926 (TPFQPFSVSASK) the composition is skewed to polar residues. Positions 951-965 (VKQRSLQKLSSRQRR) are enriched in basic residues. Phosphoserine occurs at positions 1010, 1012, 1013, 1020, 1022, 1087, and 1091. Residues 1117–1138 (TPQQSQPVELDPFGAAPFPSKQ) are disordered.

Belongs to the protein kinase superfamily. Ser/Thr protein kinase family. Autophosphorylated. Expressed in osteocytes and osteoblasts.

The protein localises to the nucleus. The enzyme catalyses L-seryl-[protein] + ATP = O-phospho-L-seryl-[protein] + ADP + H(+). It carries out the reaction L-threonyl-[protein] + ATP = O-phospho-L-threonyl-[protein] + ADP + H(+). Functionally, may be involved in osteoblast differentiation. The chain is BMP-2-inducible protein kinase (Bmp2k) from Mus musculus (Mouse).